The sequence spans 379 residues: 1-deoxy-D-xylulose 5-phosphate reductoisomerase (379 aa).

NADPH contacts are provided by T10, G11, S12, I13, R38, N39, and N121. Residue K122 participates in 1-deoxy-D-xylulose 5-phosphate binding. Residue E123 participates in NADPH binding. A Mn(2+)-binding site is contributed by D147. Positions 148, 149, 173, and 196 each coordinate 1-deoxy-D-xylulose 5-phosphate. E149 serves as a coordination point for Mn(2+). G202 is a binding site for NADPH. Positions 209, 214, 215, and 218 each coordinate 1-deoxy-D-xylulose 5-phosphate. E218 serves as a coordination point for Mn(2+).

This sequence belongs to the DXR family. Mg(2+) is required as a cofactor. Mn(2+) serves as cofactor.

The catalysed reaction is 2-C-methyl-D-erythritol 4-phosphate + NADP(+) = 1-deoxy-D-xylulose 5-phosphate + NADPH + H(+). The protein operates within isoprenoid biosynthesis; isopentenyl diphosphate biosynthesis via DXP pathway; isopentenyl diphosphate from 1-deoxy-D-xylulose 5-phosphate: step 1/6. Catalyzes the NADPH-dependent rearrangement and reduction of 1-deoxy-D-xylulose-5-phosphate (DXP) to 2-C-methyl-D-erythritol 4-phosphate (MEP). The sequence is that of 1-deoxy-D-xylulose 5-phosphate reductoisomerase from Chlamydia trachomatis serovar A (strain ATCC VR-571B / DSM 19440 / HAR-13).